Reading from the N-terminus, the 92-residue chain is Large ribosomal subunit protein bL36m (92 aa).

The transit peptide at 1 to 54 (MASLGRKFFAVGVLSRVFPSAFNAQKGLLKNASMFLTPAFRLSPSLLPWNFSRG) directs the protein to the mitochondrion.

This sequence belongs to the bacterial ribosomal protein bL36 family. In terms of assembly, component of the mitochondrial large ribosomal subunit (mt-LSU). Mature yeast 74S mitochondrial ribosomes consist of a small (37S) and a large (54S) subunit. The 37S small subunit contains a 15S ribosomal RNA (15S mt-rRNA) and at least 32 different proteins. The 54S large subunit contains a 21S rRNA (21S mt-rRNA) and at least 45 different proteins. bL36m has a zinc binding site.

Its subcellular location is the mitochondrion. Component of the mitochondrial ribosome (mitoribosome), a dedicated translation machinery responsible for the synthesis of mitochondrial genome-encoded proteins, including at least some of the essential transmembrane subunits of the mitochondrial respiratory chain. The mitoribosomes are attached to the mitochondrial inner membrane and translation products are cotranslationally integrated into the membrane. bL36m may be involved in a process influencing telomere capping. This is Large ribosomal subunit protein bL36m (rtc6) from Schizosaccharomyces pombe (strain 972 / ATCC 24843) (Fission yeast).